Reading from the N-terminus, the 413-residue chain is Eukaryotic initiation factor 4A-8 (413 aa).

Positions 40–68 match the Q motif motif; sequence DSFDAMGLQENLLRGIYAYGFEKPSAIQQ. The 171-residue stretch at 71 to 241 folds into the Helicase ATP-binding domain; sequence IVPFCKGLDV…RKFMNKPVRI (171 aa). Residue 84–91 participates in ATP binding; sequence AQSGTGKT. Positions 189 to 192 match the DEAD box motif; it reads DEAD. Positions 252 to 413 constitute a Helicase C-terminal domain; the sequence is GIKQFYVNVD…ELPSNVADLL (162 aa).

Belongs to the DEAD box helicase family. eIF4A subfamily. In terms of assembly, eIF4F is a multi-subunit complex, the composition of which varies with external and internal environmental conditions. It is composed of at least EIF4A, EIF4E and EIF4G. In terms of tissue distribution, pollen specific.

It carries out the reaction ATP + H2O = ADP + phosphate + H(+). In terms of biological role, ATP-dependent RNA helicase which is a subunit of the eIF4F complex involved in cap recognition and is required for mRNA binding to ribosome. In the current model of translation initiation, eIF4A unwinds RNA secondary structures in the 5'-UTR of mRNAs which is necessary to allow efficient binding of the small ribosomal subunit, and subsequent scanning for the initiator codon. This chain is Eukaryotic initiation factor 4A-8, found in Nicotiana tabacum (Common tobacco).